The sequence spans 250 residues: tRNA pseudouridine synthase A (250 aa).

Residue Asp52 is the Nucleophile of the active site. Tyr111 contributes to the substrate binding site.

The protein belongs to the tRNA pseudouridine synthase TruA family. In terms of assembly, homodimer.

It catalyses the reaction uridine(38/39/40) in tRNA = pseudouridine(38/39/40) in tRNA. In terms of biological role, formation of pseudouridine at positions 38, 39 and 40 in the anticodon stem and loop of transfer RNAs. The chain is tRNA pseudouridine synthase A from Methylobacterium sp. (strain 4-46).